Consider the following 394-residue polypeptide: Probable fatty acid methyltransferase (394 aa).

S-adenosyl-L-methionine-binding positions include 128–129 (YS), 163–171 (LLDVGCGWG), and 189–194 (TLSKEQ). The active site involves Cys-358.

Belongs to the CFA/CMAS family.

The polypeptide is Probable fatty acid methyltransferase (Pseudomonas putida (Arthrobacter siderocapsulatus)).